The primary structure comprises 240 residues: Adenosylcobinamide-GDP ribazoletransferase (240 aa).

5 consecutive transmembrane segments (helical) span residues 31 to 51 (LLYY…ASHL), 62 to 81 (ALLL…DGLA), 109 to 129 (IAVV…WVLV), 133 to 153 (IGAQ…GLFL), and 179 to 199 (VLLV…LLAL).

Belongs to the CobS family. It depends on Mg(2+) as a cofactor.

The protein resides in the cell inner membrane. It catalyses the reaction alpha-ribazole + adenosylcob(III)inamide-GDP = adenosylcob(III)alamin + GMP + H(+). It carries out the reaction alpha-ribazole 5'-phosphate + adenosylcob(III)inamide-GDP = adenosylcob(III)alamin 5'-phosphate + GMP + H(+). Its pathway is cofactor biosynthesis; adenosylcobalamin biosynthesis; adenosylcobalamin from cob(II)yrinate a,c-diamide: step 7/7. In terms of biological role, joins adenosylcobinamide-GDP and alpha-ribazole to generate adenosylcobalamin (Ado-cobalamin). Also synthesizes adenosylcobalamin 5'-phosphate from adenosylcobinamide-GDP and alpha-ribazole 5'-phosphate. This Pseudomonas putida (strain ATCC 47054 / DSM 6125 / CFBP 8728 / NCIMB 11950 / KT2440) protein is Adenosylcobinamide-GDP ribazoletransferase.